Here is a 983-residue protein sequence, read N- to C-terminus: Anion exchange protein 4 (983 aa).

The disordered stretch occupies residues 1–48; the sequence is MEMKLPGQEGFEASSAPRNIPSGELDSNPDPGTGPSPDGPSDTESKEL. N183 carries N-linked (GlcNAc...) asparagine glycosylation. 2 disordered regions span residues 186–205 and 332–357; these read TGTR…DNEE and RIPP…RGPA. 4 helical membrane passes run 415 to 435, 443 to 463, 500 to 520, and 530 to 550; these read AVLY…GLLG, GVLE…LMAG, VGIW…SVLV, and GFCA…MLNL. Residues 415 to 983 form a membrane (anion exchange) region; the sequence is AVLYIYLATV…KAPEINISVN (569 aa). Residues N576 and N600 are each glycosylated (N-linked (GlcNAc...) asparagine). 7 helical membrane passes run 624–644, 665–685, 712–732, 758–778, 815–835, 837–857, and 899–919; these read VPDI…FAMA, FSSV…GLAT, PWWW…LIFM, LFCV…WYVS, GLVV…LKFI, MPVL…SIQF, and LWII…LGLV. Residues 946 to 957 show a composition bias toward basic and acidic residues; sequence RSIPEKGLEPEH. Residues 946-983 form a disordered region; it reads RSIPEKGLEPEHSFSGSDSEDSELMYQPKAPEINISVN. N979 is a glycosylation site (N-linked (GlcNAc...) asparagine).

Belongs to the anion exchanger (TC 2.A.31) family. Kidney specific.

It is found in the basolateral cell membrane. It carries out the reaction 2 hydrogencarbonate(out) + chloride(in) + Na(+)(out) = 2 hydrogencarbonate(in) + chloride(out) + Na(+)(in). The catalysed reaction is K(+)(in) + 2 hydrogencarbonate(in) + chloride(out) = K(+)(out) + 2 hydrogencarbonate(out) + chloride(in). It catalyses the reaction Li(+)(in) + 2 hydrogencarbonate(in) + chloride(out) = Li(+)(out) + 2 hydrogencarbonate(out) + chloride(in). The enzyme catalyses Rb(+)(in) + 2 hydrogencarbonate(in) + chloride(out) = Rb(+)(out) + 2 hydrogencarbonate(out) + chloride(in). It carries out the reaction Cs(+)(in) + 2 hydrogencarbonate(in) + chloride(out) = Cs(+)(out) + 2 hydrogencarbonate(out) + chloride(in). Functionally, electroneutral Cl(-)/HCO3(-) antiporter that favors chloride ion entry and efflux of hydrogencarbonate and sodium ion across the basolateral membrane and may participate in salivary secretion. Also mediates Cl(-)/HCO3(-) exchange activity in the presence of K(+) as well as Cs(+), Li(+), and Rb(+). Does not contribute to Cl(-)/HCO3(-) exchanger in the apical membrane of the upper villous epithelium. This Homo sapiens (Human) protein is Anion exchange protein 4.